The following is a 146-amino-acid chain: 3-hydroxyacyl-[acyl-carrier-protein] dehydratase FabZ (146 aa).

His-49 is an active-site residue.

This sequence belongs to the thioester dehydratase family. FabZ subfamily.

The protein localises to the cytoplasm. The enzyme catalyses a (3R)-hydroxyacyl-[ACP] = a (2E)-enoyl-[ACP] + H2O. Involved in unsaturated fatty acids biosynthesis. Catalyzes the dehydration of short chain beta-hydroxyacyl-ACPs and long chain saturated and unsaturated beta-hydroxyacyl-ACPs. The protein is 3-hydroxyacyl-[acyl-carrier-protein] dehydratase FabZ of Azotobacter vinelandii (strain DJ / ATCC BAA-1303).